The sequence spans 485 residues: MSEGVEAIVANDNGTDQVNGNRTGKDNEEHDGSTGSNLSNFLWHGGSVWDAWFSCASNQVAQVLLTLPYSFSQLGMLSGIVLQIFYGLLGSWTAYLISVLYVEYRARKEKEGKSFKNHVIQWFEVLDGLLGSYWKALGLAFNCTFLLFGSVIQLIACASNIYYINDHLDKRTWTYIFGACCATTVFIPSFHNYRIWSFLGLGMTTYTAWYLAIASIIHGQAEGVKHSGPTKLVLYFTGATNILYTFGGHAVTVEIMHAMWKPQKFKYIYLMATLYVFTLTIPSAAAVYWAFGDALLDHSNAFSLMPKNAWRDAAVILMLIHQFITFGFACTPLYFVWEKVIGMHDTKSICLRALARLPVVIPIWFLAIIFPFFGPINSAVGALLVSFTVYIIPSLAHMLTYRSASARQNAAEKPPFFMPSWTAMYVLNAFVVVWVLIVGFGFGGWASVTNFVRQVDTFGLFAKCYQCKPAAAAAHAPVSALHHRL.

The Cytoplasmic portion of the chain corresponds to 1-59 (MSEGVEAIVANDNGTDQVNGNRTGKDNEEHDGSTGSNLSNFLWHGGSVWDAWFSCASNQ). Polar residues predominate over residues 12–22 (DNGTDQVNGNR). Residues 12–33 (DNGTDQVNGNRTGKDNEEHDGS) form a disordered region. Positions 23-32 (TGKDNEEHDG) are enriched in basic and acidic residues. Residues 60–77 (VAQVLLTLPYSFSQLGML) form a helical membrane-spanning segment. Over 78-79 (SG) the chain is Extracellular. The helical transmembrane segment at 80-100 (IVLQIFYGLLGSWTAYLISVL) threads the bilayer. Over 101–135 (YVEYRARKEKEGKSFKNHVIQWFEVLDGLLGSYWK) the chain is Cytoplasmic. The chain crosses the membrane as a helical span at residues 136–156 (ALGLAFNCTFLLFGSVIQLIA). Residues 157 to 172 (CASNIYYINDHLDKRT) lie on the Extracellular side of the membrane. Residues 173–193 (WTYIFGACCATTVFIPSFHNY) form a helical membrane-spanning segment. The Cytoplasmic segment spans residues 194–196 (RIW). The helical transmembrane segment at 197–217 (SFLGLGMTTYTAWYLAIASII) threads the bilayer. Over 218–232 (HGQAEGVKHSGPTKL) the chain is Extracellular. The helical transmembrane segment at 233–253 (VLYFTGATNILYTFGGHAVTV) threads the bilayer. The Cytoplasmic segment spans residues 254–266 (EIMHAMWKPQKFK). The helical transmembrane segment at 267–287 (YIYLMATLYVFTLTIPSAAAV) threads the bilayer. Topologically, residues 288-314 (YWAFGDALLDHSNAFSLMPKNAWRDAA) are extracellular. Residues 315–335 (VILMLIHQFITFGFACTPLYF) form a helical membrane-spanning segment. The Cytoplasmic segment spans residues 336-356 (VWEKVIGMHDTKSICLRALAR). A helical membrane pass occupies residues 357 to 377 (LPVVIPIWFLAIIFPFFGPIN). Position 378 (S378) is a topological domain, extracellular. Residues 379–399 (AVGALLVSFTVYIIPSLAHML) traverse the membrane as a helical segment. Topologically, residues 400 to 425 (TYRSASARQNAAEKPPFFMPSWTAMY) are cytoplasmic. Residues 426 to 446 (VLNAFVVVWVLIVGFGFGGWA) form a helical membrane-spanning segment. At 447-485 (SVTNFVRQVDTFGLFAKCYQCKPAAAAAHAPVSALHHRL) the chain is on the extracellular side.

Belongs to the amino acid/polyamine transporter 2 family. Amino acid/auxin permease (AAAP) (TC 2.A.18.1) subfamily. As to expression, expressed in root and shoot apical tissues. In root apex, confined to stele initials, protophloem poles, statolith-containing S2 columella cells, lateral root cap cells (LRC), and in epidermal cells from the distal elongation zone (DEZ) up to central elongation zone (CEZ).

The protein localises to the cell membrane. With respect to regulation, auxin uptake mediated by AUX1 is inhibited by chromosaponin-1 (CSI), 1-naphthoxyacetic acid (1-NOA) and 3-chloro-4-hydroxyphenylacetic acid (CHPAA). In terms of biological role, carrier protein involved in proton-driven auxin influx. Mediates the formation of auxin gradient from developing leaves (site of auxin biosynthesis) to tips by contributing to the loading of auxin in vascular tissues and facilitating acropetal (base to tip) auxin transport within inner tissues of the root apex, and basipetal (tip to base) auxin transport within outer tissues of the root apex. Unloads auxin from the mature phloem to deliver the hormone to the root meristem via the protophloem cell files. Coordinated subcellular localization of AUX1 is regulated by a brefeldin A-sensitive (BFA) vesicle trafficking process. Involved in lateral root formation, trichoblast polarization and root hair elongation. Required for gravitropism and thigmotropism, especially in roots, by modulating responses to auxin, ethylene and cytokinins such as benzyladenine (BA). Needed for ammonium-mediated root-growth inhibition. Confers sensitivity to the herbicide 2,4-dichlorophenoxyacetic acid (2,4-D, auxin analog), and to polar auxin transport inhibitors such as N-1-naphthylphthalamic acid (NPA) and 2,3,5-triiodobenzoic acid (TIBA). In Arabidopsis thaliana (Mouse-ear cress), this protein is Auxin transporter protein 1 (AUX1).